We begin with the raw amino-acid sequence, 458 residues long: Phosphomethylpyrimidine synthase (458 aa).

Substrate-binding positions include asparagine 80, methionine 109, tyrosine 139, histidine 175, 195–197 (SRG), 236–239 (DSLR), and glutamate 275. Histidine 279 is a binding site for Zn(2+). A substrate-binding site is contributed by tyrosine 302. Residue histidine 343 participates in Zn(2+) binding. Residues cysteine 423, cysteine 426, and cysteine 431 each contribute to the [4Fe-4S] cluster site.

Belongs to the ThiC family. [4Fe-4S] cluster serves as cofactor.

The enzyme catalyses 5-amino-1-(5-phospho-beta-D-ribosyl)imidazole + S-adenosyl-L-methionine = 4-amino-2-methyl-5-(phosphooxymethyl)pyrimidine + CO + 5'-deoxyadenosine + formate + L-methionine + 3 H(+). It functions in the pathway cofactor biosynthesis; thiamine diphosphate biosynthesis. In terms of biological role, catalyzes the synthesis of the hydroxymethylpyrimidine phosphate (HMP-P) moiety of thiamine from aminoimidazole ribotide (AIR) in a radical S-adenosyl-L-methionine (SAM)-dependent reaction. This is Phosphomethylpyrimidine synthase from Cyanothece sp. (strain PCC 7425 / ATCC 29141).